We begin with the raw amino-acid sequence, 111 residues long: uncharacterized protein (111 aa).

This is an uncharacterized protein from Saccharolobus solfataricus (strain ATCC 35092 / DSM 1617 / JCM 11322 / P2) (Sulfolobus solfataricus).